The chain runs to 68 residues: Large ribosomal subunit protein bL35 (68 aa).

2 stretches are compositionally biased toward basic residues: residues 1–11 (MPKLKTRSSAK) and 19–29 (SGKVKHGKAFA). The disordered stretch occupies residues 1 to 54 (MPKLKTRSSAKKRFDVKKSGKVKHGKAFAKHLFTFSKTPKSKRSNRGTGHLRDM).

The protein belongs to the bacterial ribosomal protein bL35 family.

This chain is Large ribosomal subunit protein bL35, found in Myxococcus xanthus (strain DK1622).